The sequence spans 135 residues: uncharacterized protein (135 aa).

This is an uncharacterized protein from Homo sapiens (Human).